Here is a 315-residue protein sequence, read N- to C-terminus: Methionyl-tRNA formyltransferase (315 aa).

113–116 provides a ligand contact to (6S)-5,6,7,8-tetrahydrofolate; sequence SLLP.

The protein belongs to the Fmt family.

It carries out the reaction L-methionyl-tRNA(fMet) + (6R)-10-formyltetrahydrofolate = N-formyl-L-methionyl-tRNA(fMet) + (6S)-5,6,7,8-tetrahydrofolate + H(+). Its function is as follows. Attaches a formyl group to the free amino group of methionyl-tRNA(fMet). The formyl group appears to play a dual role in the initiator identity of N-formylmethionyl-tRNA by promoting its recognition by IF2 and preventing the misappropriation of this tRNA by the elongation apparatus. The protein is Methionyl-tRNA formyltransferase of Escherichia fergusonii (strain ATCC 35469 / DSM 13698 / CCUG 18766 / IAM 14443 / JCM 21226 / LMG 7866 / NBRC 102419 / NCTC 12128 / CDC 0568-73).